The chain runs to 399 residues: Probable peptidoglycan glycosyltransferase FtsW (399 aa).

Helical transmembrane passes span 19-39 (PLPV…VMIS), 61-81 (ILFA…PVSW), 85-105 (SGWL…TPLG), 114-134 (WIPM…CLIA), 160-180 (VLGV…TVVL), 198-218 (FMPL…TQPY), 285-305 (LLGA…GLVI), 314-334 (MAFG…QAGI), and 350-370 (LPLV…IAVI).

The protein belongs to the SEDS family. FtsW subfamily.

The protein localises to the cell inner membrane. It carries out the reaction [GlcNAc-(1-&gt;4)-Mur2Ac(oyl-L-Ala-gamma-D-Glu-L-Lys-D-Ala-D-Ala)](n)-di-trans,octa-cis-undecaprenyl diphosphate + beta-D-GlcNAc-(1-&gt;4)-Mur2Ac(oyl-L-Ala-gamma-D-Glu-L-Lys-D-Ala-D-Ala)-di-trans,octa-cis-undecaprenyl diphosphate = [GlcNAc-(1-&gt;4)-Mur2Ac(oyl-L-Ala-gamma-D-Glu-L-Lys-D-Ala-D-Ala)](n+1)-di-trans,octa-cis-undecaprenyl diphosphate + di-trans,octa-cis-undecaprenyl diphosphate + H(+). The protein operates within cell wall biogenesis; peptidoglycan biosynthesis. In terms of biological role, peptidoglycan polymerase that is essential for cell division. This is Probable peptidoglycan glycosyltransferase FtsW from Marinobacter nauticus (strain ATCC 700491 / DSM 11845 / VT8) (Marinobacter aquaeolei).